The primary structure comprises 473 residues: Ribulose bisphosphate carboxylase large chain (473 aa).

Residues asparagine 116 and threonine 166 each coordinate substrate. Lysine 168 acts as the Proton acceptor in catalysis. Residue lysine 170 participates in substrate binding. Mg(2+) is bound by residues lysine 194, aspartate 196, and glutamate 197. Lysine 194 is subject to N6-carboxylysine. The Proton acceptor role is filled by histidine 287. The substrate site is built by arginine 288, histidine 320, and serine 372.

This sequence belongs to the RuBisCO large chain family. Type I subfamily. As to quaternary structure, heterohexadecamer of 8 large chains and 8 small chains. Mg(2+) serves as cofactor.

It catalyses the reaction 2 (2R)-3-phosphoglycerate + 2 H(+) = D-ribulose 1,5-bisphosphate + CO2 + H2O. It carries out the reaction D-ribulose 1,5-bisphosphate + O2 = 2-phosphoglycolate + (2R)-3-phosphoglycerate + 2 H(+). In terms of biological role, ruBisCO catalyzes two reactions: the carboxylation of D-ribulose 1,5-bisphosphate, the primary event in carbon dioxide fixation, as well as the oxidative fragmentation of the pentose substrate. Both reactions occur simultaneously and in competition at the same active site. This chain is Ribulose bisphosphate carboxylase large chain, found in Nitrosomonas sp. (strain ENI-11).